The following is a 186-amino-acid chain: Protein Syd (186 aa).

Belongs to the Syd family.

Its subcellular location is the cell inner membrane. Its function is as follows. Interacts with the SecY protein in vivo. May bind preferentially to an uncomplexed state of SecY, thus functioning either as a chelating agent for excess SecY in the cell or as a regulatory factor that negatively controls the translocase function. The sequence is that of Protein Syd from Erwinia tasmaniensis (strain DSM 17950 / CFBP 7177 / CIP 109463 / NCPPB 4357 / Et1/99).